We begin with the raw amino-acid sequence, 37 residues long: Large ribosomal subunit protein bL36 (37 aa).

This sequence belongs to the bacterial ribosomal protein bL36 family.

This Ureaplasma parvum serovar 3 (strain ATCC 27815 / 27 / NCTC 11736) protein is Large ribosomal subunit protein bL36.